The primary structure comprises 137 residues: Large ribosomal subunit protein mL41 (137 aa).

The N-terminal 13 residues, 1–13 (MGVLAAAARCLVR), are a transit peptide targeting the mitochondrion.

The protein belongs to the mitochondrion-specific ribosomal protein mL41 family. In terms of assembly, component of the mitochondrial large ribosomal subunit (mt-LSU). Mature mammalian 55S mitochondrial ribosomes consist of a small (28S) and a large (39S) subunit. The 28S small subunit contains a 12S ribosomal RNA (12S mt-rRNA) and 30 different proteins. The 39S large subunit contains a 16S rRNA (16S mt-rRNA), a copy of mitochondrial valine transfer RNA (mt-tRNA(Val)), which plays an integral structural role, and 52 different proteins. Interacts with BCL2. Present in kidney, liver, thymus and testis, and at lower level in brain and spleen (at protein level).

The protein localises to the mitochondrion. Functionally, component of the mitochondrial ribosome large subunit. Also involved in apoptosis and cell cycle. Enhances p53/TP53 stability, thereby contributing to p53/TP53-induced apoptosis in response to growth-inhibitory condition. Enhances p53/TP53 translocation to the mitochondria. Has the ability to arrest the cell cycle at the G1 phase, possibly by stabilizing the CDKN1A and CDKN1B (p27Kip1) proteins. The sequence is that of Large ribosomal subunit protein mL41 (MRPL41) from Homo sapiens (Human).